A 258-amino-acid chain; its full sequence is Regulatory protein RecX (258 aa).

It belongs to the RecX family.

The protein localises to the cytoplasm. Its function is as follows. Modulates RecA activity. The protein is Regulatory protein RecX of Streptococcus uberis (strain ATCC BAA-854 / 0140J).